The primary structure comprises 199 residues: Small ribosomal subunit protein mS38 (199 aa).

Belongs to the mitochondrion-specific ribosomal protein mS38 family. As to quaternary structure, component of the mitochondrial small ribosomal subunit (mt-SSU). Mature mammalian 55S mitochondrial ribosomes consist of a small (28S) and a large (39S) subunit. The 28S small subunit contains a 12S ribosomal RNA (12S mt-rRNA) and 30 different proteins. The 39S large subunit contains a 16S rRNA (16S mt-rRNA), a copy of mitochondrial valine transfer RNA (mt-tRNA(Val)), which plays an integral structural role, and 52 different proteins. Interacts with Aurora-A. As to expression, ubiquitously expressed and especially highly expressed in heart, skeletal muscle and testis.

Its subcellular location is the mitochondrion matrix. The protein resides in the nucleus. May act as a negative regulator of Aurora-A kinase, by down-regulation through proteasome-dependent degradation. The sequence is that of Small ribosomal subunit protein mS38 (AURKAIP1) from Homo sapiens (Human).